The chain runs to 206 residues: Large ribosomal subunit protein uL4 (206 aa).

Residues 47–94 (NRAQKGRSEIAKSTRKPFRQKGTGNARAGMASSPLWRGGGKIFPNSPD) are disordered.

This sequence belongs to the universal ribosomal protein uL4 family. As to quaternary structure, part of the 50S ribosomal subunit.

Its function is as follows. One of the primary rRNA binding proteins, this protein initially binds near the 5'-end of the 23S rRNA. It is important during the early stages of 50S assembly. It makes multiple contacts with different domains of the 23S rRNA in the assembled 50S subunit and ribosome. Functionally, forms part of the polypeptide exit tunnel. This Azoarcus sp. (strain BH72) protein is Large ribosomal subunit protein uL4.